Reading from the N-terminus, the 383-residue chain is S-adenosylmethionine synthase (383 aa).

His-15 is a binding site for ATP. Mg(2+) is bound at residue Asp-17. Residue Glu-43 coordinates K(+). Glu-56 and Gln-99 together coordinate L-methionine. A flexible loop region spans residues 99 to 109 (QSPDINQGVDR). ATP is bound by residues 164 to 166 (DAK), 230 to 231 (RF), Asp-239, 245 to 246 (RK), Ala-262, and Lys-266. Asp-239 is an L-methionine binding site. Lys-270 serves as a coordination point for L-methionine.

This sequence belongs to the AdoMet synthase family. As to quaternary structure, homotetramer; dimer of dimers. Mg(2+) serves as cofactor. The cofactor is K(+).

The protein resides in the cytoplasm. The enzyme catalyses L-methionine + ATP + H2O = S-adenosyl-L-methionine + phosphate + diphosphate. Its pathway is amino-acid biosynthesis; S-adenosyl-L-methionine biosynthesis; S-adenosyl-L-methionine from L-methionine: step 1/1. Functionally, catalyzes the formation of S-adenosylmethionine (AdoMet) from methionine and ATP. The overall synthetic reaction is composed of two sequential steps, AdoMet formation and the subsequent tripolyphosphate hydrolysis which occurs prior to release of AdoMet from the enzyme. This chain is S-adenosylmethionine synthase, found in Pectobacterium carotovorum subsp. carotovorum (strain PC1).